Consider the following 514-residue polypeptide: Tryptophan decarboxylase 1 (514 aa).

Residue Phe104 participates in serotonin binding. Pyridoxal 5'-phosphate contacts are provided by Thr175 and Ser176. Serotonin is bound at residue His214. Thr273 is a binding site for pyridoxal 5'-phosphate. At Lys330 the chain carries N6-(pyridoxal phosphate)lysine. Tyr359 functions as the Proton donor in the catalytic mechanism. Residues Val380 and Gly381 each contribute to the pyridoxal 5'-phosphate site.

Belongs to the group II decarboxylase family. Forms homodimers. Pyridoxal 5'-phosphate is required as a cofactor.

It carries out the reaction L-tryptophan + H(+) = tryptamine + CO2. The catalysed reaction is 5-hydroxy-L-tryptophan + H(+) = serotonin + CO2. In terms of biological role, involved in serotonin biosynthesis. Catalyzes the decarboxylation of L-tryptophan to produce tryptamine, which is converted to serotonin by tryptamine 5-hydroxylase. May play a major role in serotonin biosynthesis during senescence. Accumulation of serotonin attenuates leaf senescence. Catalyzes the decarboxylation of 5-hydroxy-L-tryptophan to produce serotonin. This is Tryptophan decarboxylase 1 from Oryza sativa subsp. japonica (Rice).